The chain runs to 320 residues: Phosphate acyltransferase (320 aa).

This sequence belongs to the PlsX family. In terms of assembly, homodimer. Probably interacts with PlsY.

It is found in the cytoplasm. It catalyses the reaction a fatty acyl-[ACP] + phosphate = an acyl phosphate + holo-[ACP]. It functions in the pathway lipid metabolism; phospholipid metabolism. In terms of biological role, catalyzes the reversible formation of acyl-phosphate (acyl-PO(4)) from acyl-[acyl-carrier-protein] (acyl-ACP). This enzyme utilizes acyl-ACP as fatty acyl donor, but not acyl-CoA. In Chlamydia pneumoniae (Chlamydophila pneumoniae), this protein is Phosphate acyltransferase.